We begin with the raw amino-acid sequence, 437 residues long: Dolichyl-diphosphooligosaccharide--protein glycosyltransferase 48 kDa subunit (437 aa).

An N-terminal signal peptide occupies residues 1-24 (MVNLSRSVALISVFLLPLLSFSFS). The Lumenal segment spans residues 25–414 (VDNPTDRRVL…YERFIPTAYP (390 aa)). The chain crosses the membrane as a helical span at residues 415-435 (YYGACFTTMAGFFVFSFVYLY). At 436-437 (HK) the chain is on the cytoplasmic side.

The protein belongs to the DDOST 48 kDa subunit family. Component of the oligosaccharyltransferase (OST) complex.

It is found in the endoplasmic reticulum membrane. Its pathway is protein modification; protein glycosylation. In terms of biological role, subunit of the oligosaccharyl transferase (OST) complex that catalyzes the initial transfer of a defined glycan (Glc(3)Man(9)GlcNAc(2) in eukaryotes) from the lipid carrier dolichol-pyrophosphate to an asparagine residue within an Asn-X-Ser/Thr consensus motif in nascent polypeptide chains, the first step in protein N-glycosylation. N-glycosylation occurs cotranslationally and the complex associates with the Sec61 complex at the channel-forming translocon complex that mediates protein translocation across the endoplasmic reticulum (ER). All subunits are required for a maximal enzyme activity. This chain is Dolichyl-diphosphooligosaccharide--protein glycosyltransferase 48 kDa subunit (OST48), found in Arabidopsis thaliana (Mouse-ear cress).